A 532-amino-acid polypeptide reads, in one-letter code: Hepatocyte nuclear factor 1-beta-B (532 aa).

Residues 1 to 35 are dimerization; sequence MFTDMVSKLTSLQQELLSALLDSGVTKDVLVQALE. Residues 5–36 enclose the HNF-p1 domain; that stretch reads MVSKLTSLQQELLSALLDSGVTKDVLVQALED. The disordered stretch occupies residues 74–95; the sequence is TGAQGKGGKLSGDEGSEDGDDF. In terms of domain architecture, POU-specific atypical spans 102–197; it reads RELQSLNTEE…IDRQFDRVQG (96 aa). Over residues 222 to 231 the composition is skewed to gly residues; sequence SSGAAGGSGA. 2 disordered regions span residues 222–245 and 500–532; these read SSGA…KRMR and EAGQ…LQAW. A DNA-binding region (homeobox; HNF1-type) is located at residues 244–324; the sequence is MRRNRFKWGP…NRRKEEAFRQ (81 aa). Residues 505–532 are compositionally biased toward polar residues; sequence SHPSRYSTMDSSTITHLGSSKQCPLQAW.

This sequence belongs to the HNF1 homeobox family. Binds DNA as a dimer. Can form homodimer or heterodimer with HNF1-alpha. As to expression, first expressed at stage 10 in the intermediate mesoderm. Expressed in rhombomere r5 by 14 hpf with expression diminishing by 18 hpf.

The protein localises to the nucleus. Functionally, transcription factor that binds to the inverted palindrome 5'-GTTAATNATTAAC-3'. Acts downstream of hnf1ba but is not required for induction of rhombomere r5/r6 gene expression in the hindbrain. The polypeptide is Hepatocyte nuclear factor 1-beta-B (Danio rerio (Zebrafish)).